We begin with the raw amino-acid sequence, 667 residues long: uncharacterized protein (667 aa).

The disordered stretch occupies residues 321-345 (AGEAASSDHDQKISRVTRKRPREPK). The 178-residue stretch at 375–552 (EIYMADTPSV…LQRIGLTGLA (178 aa)) folds into the Helicase ATP-binding domain. 388–395 (APPGYGKT) provides a ligand contact to ATP. A DEAH box motif is present at residues 498–501 (DEFH).

The protein belongs to the helicase family. Yeast subtelomeric Y' repeat subfamily.

This is an uncharacterized protein from Saccharomyces cerevisiae (strain ATCC 204508 / S288c) (Baker's yeast).